A 292-amino-acid polypeptide reads, in one-letter code: MTPNPMTNDLPDPAAAPDSAPLYSPARVRALLAAHGLKPTKSLGQNFLIDGNILRAIAEAGGAAPGENVLEIGPGLGVLTREVASRGARVTALEKDERLRPVLAETLAGLDVNVIWGDALDFDYAALPAGTRVIANLPYYITGLLLTRFMQAPGVVSATVLVQKEVAQRLVAQPGQDNYGFLSAVAALYGSVKHVRDVPKGAFFPAPDVTSSVVRLDFDRTRPQPDPAFVSFVDNALRYRRKTLRNNLRMMGHSGEAIDAALSDLGLRPDVRAEDVPLSGLRAVAAALGVVR.

N46, L48, G73, E94, D118, and N136 together coordinate S-adenosyl-L-methionine.

It belongs to the class I-like SAM-binding methyltransferase superfamily. rRNA adenine N(6)-methyltransferase family. RsmA subfamily.

The protein localises to the cytoplasm. The catalysed reaction is adenosine(1518)/adenosine(1519) in 16S rRNA + 4 S-adenosyl-L-methionine = N(6)-dimethyladenosine(1518)/N(6)-dimethyladenosine(1519) in 16S rRNA + 4 S-adenosyl-L-homocysteine + 4 H(+). In terms of biological role, specifically dimethylates two adjacent adenosines (A1518 and A1519) in the loop of a conserved hairpin near the 3'-end of 16S rRNA in the 30S particle. May play a critical role in biogenesis of 30S subunits. This Deinococcus radiodurans (strain ATCC 13939 / DSM 20539 / JCM 16871 / CCUG 27074 / LMG 4051 / NBRC 15346 / NCIMB 9279 / VKM B-1422 / R1) protein is Ribosomal RNA small subunit methyltransferase A.